The following is a 55-amino-acid chain: Large ribosomal subunit protein bL33 (55 aa).

This sequence belongs to the bacterial ribosomal protein bL33 family.

This chain is Large ribosomal subunit protein bL33, found in Paraburkholderia phytofirmans (strain DSM 17436 / LMG 22146 / PsJN) (Burkholderia phytofirmans).